The sequence spans 691 residues: DNA ligase (691 aa).

NAD(+) contacts are provided by residues 41–45, 91–92, and Glu-121; these read DAEFD and SL. Residue Lys-123 is the N6-AMP-lysine intermediate of the active site. Residues Arg-144, Glu-184, Lys-300, and Lys-324 each coordinate NAD(+). 4 residues coordinate Zn(2+): Cys-418, Cys-421, Cys-437, and Cys-443. Positions 607-691 constitute a BRCT domain; sequence SVPRTLAGLT…LLADGPASRT (85 aa).

This sequence belongs to the NAD-dependent DNA ligase family. LigA subfamily. Requires Mg(2+) as cofactor. The cofactor is Mn(2+).

It carries out the reaction NAD(+) + (deoxyribonucleotide)n-3'-hydroxyl + 5'-phospho-(deoxyribonucleotide)m = (deoxyribonucleotide)n+m + AMP + beta-nicotinamide D-nucleotide.. DNA ligase that catalyzes the formation of phosphodiester linkages between 5'-phosphoryl and 3'-hydroxyl groups in double-stranded DNA using NAD as a coenzyme and as the energy source for the reaction. It is essential for DNA replication and repair of damaged DNA. The protein is DNA ligase of Mycobacterium tuberculosis (strain ATCC 25177 / H37Ra).